A 515-amino-acid chain; its full sequence is Fatty acyl-CoA reductase 2 (515 aa).

Residues methionine 1–arginine 464 are Cytoplasmic-facing. A helical membrane pass occupies residues asparagine 465–alanine 484. The Peroxisomal segment spans residues arginine 485–valine 515.

This sequence belongs to the fatty acyl-CoA reductase family. In terms of tissue distribution, specifically expressed in the meibomian glands of the eyelid and the sebaceous glands of the skin. Also expressed in the brain where large quantities of ether lipids are synthesized.

It is found in the peroxisome membrane. It carries out the reaction a long-chain fatty acyl-CoA + 2 NADPH + 2 H(+) = a long-chain primary fatty alcohol + 2 NADP(+) + CoA. It catalyses the reaction hexadecanoyl-CoA + 2 NADPH + 2 H(+) = hexadecan-1-ol + 2 NADP(+) + CoA. The enzyme catalyses octadecanoyl-CoA + 2 NADPH + 2 H(+) = octadecan-1-ol + 2 NADP(+) + CoA. The catalysed reaction is a very long-chain fatty acyl-CoA + 2 NADPH + 2 H(+) = a very long-chain primary fatty alcohol + 2 NADP(+) + CoA. It carries out the reaction an ultra-long-chain fatty acyl-CoA + 2 NADPH + 2 H(+) = an ultra long-chain primary fatty alcohol + 2 NADP(+) + CoA. It catalyses the reaction eicosanoyl-CoA + 2 NADPH + 2 H(+) = eicosan-1-ol + 2 NADP(+) + CoA. The enzyme catalyses docosanoyl-CoA + 2 NADPH + 2 H(+) = docosan-1-ol + 2 NADP(+) + CoA. The catalysed reaction is tetracosanoyl-CoA + 2 NADPH + 2 H(+) = tetracosan-1-ol + 2 NADP(+) + CoA. It carries out the reaction hexacosanoyl-CoA + 2 NADPH + 2 H(+) = hexacosan-1-ol + 2 NADP(+) + CoA. It catalyses the reaction octacosanoyl-CoA + 2 NADPH + 2 H(+) = octacosan-1-ol + 2 NADP(+) + CoA. The enzyme catalyses triacontanoyl-CoA + 2 NADPH + 2 H(+) = triacontan-1-ol + 2 NADP(+) + CoA. The catalysed reaction is 18-methylnonadecanoyl-CoA + 2 NADPH + 2 H(+) = 18-methylnonadecan-1-ol + 2 NADP(+) + CoA. It carries out the reaction 20-methylheneicosanoyl-CoA + 2 NADPH + 2 H(+) = 20-methylheneicosan-1-ol + 2 NADP(+) + CoA. It catalyses the reaction 22-methyltricosanoyl-CoA + 2 NADPH + 2 H(+) = 22-methyltricosan-1-ol + 2 NADP(+) + CoA. The enzyme catalyses 24-methylpentacosanoyl-CoA + 2 NADPH + 2 H(+) = 24-methylpentacosan-1-ol + 2 NADP(+) + CoA. Its function is as follows. Catalyzes the reduction of saturated but not unsaturated C16 or C18 fatty acyl-CoA to fatty alcohols. A lower activity can be observed with shorter fatty acyl-CoA substrates. Can produce very long-chain and ultra long-chain FAls, regardless of whether they have a straight or branched chain. It may play a role in the production of ether lipids/plasmalogens and wax monoesters which synthesis requires fatty alcohols as substrates. The chain is Fatty acyl-CoA reductase 2 from Mus musculus (Mouse).